A 194-amino-acid polypeptide reads, in one-letter code: Large ribosomal subunit protein bL9c (194 aa).

A chloroplast-targeting transit peptide spans 1–39 (MASSTLSSLSSTPLQHSFAANLKTCSQFPNKSSGFMVFA).

Belongs to the bacterial ribosomal protein bL9 family. Part of the 50S ribosomal subunit.

Its subcellular location is the plastid. The protein localises to the chloroplast. Functionally, binds to the 23S rRNA. In Pisum sativum (Garden pea), this protein is Large ribosomal subunit protein bL9c (RPL9).